A 401-amino-acid polypeptide reads, in one-letter code: MTQYASPILTSLLDTDAYKLHMQQAVFHRYPAISVAAEFRCRGDELLGEYADEIGAQIALMSQLALTDAEFDYLSGLPFFREDYLNWLRDFRYDPQQVQIENHAGKLHIRIAGPWREVIMWEVPLLAVISEVVHRHRSPDVTPEMAVAHLRNKLAQFKAMSSDVDISRFKLMDFGTRRRFSQAVQQAIVGTLKNEFPYLVGTSNYDLAHQLDLAPVGTQAHEWFQAHQQISPVLANSQRAALQAWLDEYPDQLGIALTDCITMDAFLRDFGPQFAQRYQGLRHDSGDPFEWGEKAIAHFQKLGIDPMSKTLVFSDNLDLDKALALYRHFYQRVNLVFGIGTRLTCDIPGVKPLNIVIKLVECKGKPVAKLSDSPGKTICQDQAFVKALRKAFDLPLVKKAS.

His221 is modified (phosphohistidine; by autocatalysis).

The protein belongs to the NAPRTase family. In terms of processing, transiently phosphorylated on a His residue during the reaction cycle. Phosphorylation strongly increases the affinity for substrates and increases the rate of nicotinate D-ribonucleotide production. Dephosphorylation regenerates the low-affinity form of the enzyme, leading to product release.

It carries out the reaction nicotinate + 5-phospho-alpha-D-ribose 1-diphosphate + ATP + H2O = nicotinate beta-D-ribonucleotide + ADP + phosphate + diphosphate. The protein operates within cofactor biosynthesis; NAD(+) biosynthesis; nicotinate D-ribonucleotide from nicotinate: step 1/1. Its function is as follows. Catalyzes the synthesis of beta-nicotinate D-ribonucleotide from nicotinate and 5-phospho-D-ribose 1-phosphate at the expense of ATP. The sequence is that of Nicotinate phosphoribosyltransferase from Serratia proteamaculans (strain 568).